A 257-amino-acid chain; its full sequence is Outer dense fiber protein 4 (257 aa).

The segment at 1 to 41 (MDAEYSGNEFPRSEGERDQHQRPGKERKSGEAGWGTGELGQ) is disordered. A compositionally biased stretch (basic and acidic residues) spans 11 to 30 (PRSEGERDQHQRPGKERKSG). Ser-64 is subject to Phosphoserine. Transmembrane regions (helical) follow at residues 80-100 (AQVLASELSLVAFILLLVVAF), 152-172 (VTFIFSTLMLFPINIWIFELE), and 179-199 (IGWSYFIGWLVLILYFTCAIL).

Expressed in testis and sperm; especially localized to sperm tail (at protein level).

It localises to the membrane. Functionally, component of the outer dense fibers (ODF) of spermatozoa which could be involved in sperm tail structure, sperm movement and general organization of cellular cytoskeleton. The polypeptide is Outer dense fiber protein 4 (ODF4) (Homo sapiens (Human)).